A 213-amino-acid polypeptide reads, in one-letter code: Urease accessory protein UreG (213 aa).

10–17 serves as a coordination point for GTP; it reads GPVGSGKT.

The protein belongs to the SIMIBI class G3E GTPase family. UreG subfamily. Homodimer. UreD, UreF and UreG form a complex that acts as a GTP-hydrolysis-dependent molecular chaperone, activating the urease apoprotein by helping to assemble the nickel containing metallocenter of UreC. The UreE protein probably delivers the nickel.

The protein localises to the cytoplasm. In terms of biological role, facilitates the functional incorporation of the urease nickel metallocenter. This process requires GTP hydrolysis, probably effectuated by UreG. The chain is Urease accessory protein UreG from Deinococcus radiodurans (strain ATCC 13939 / DSM 20539 / JCM 16871 / CCUG 27074 / LMG 4051 / NBRC 15346 / NCIMB 9279 / VKM B-1422 / R1).